A 219-amino-acid polypeptide reads, in one-letter code: Endonuclease III (219 aa).

In terms of domain architecture, HhH spans 109–128 (RDELVKLPGVGRKTANVVVS). 4 residues coordinate [4Fe-4S] cluster: Cys189, Cys196, Cys199, and Cys205.

Belongs to the Nth/MutY family. The cofactor is [4Fe-4S] cluster.

It carries out the reaction 2'-deoxyribonucleotide-(2'-deoxyribose 5'-phosphate)-2'-deoxyribonucleotide-DNA = a 3'-end 2'-deoxyribonucleotide-(2,3-dehydro-2,3-deoxyribose 5'-phosphate)-DNA + a 5'-end 5'-phospho-2'-deoxyribonucleoside-DNA + H(+). Its function is as follows. DNA repair enzyme that has both DNA N-glycosylase activity and AP-lyase activity. The DNA N-glycosylase activity releases various damaged pyrimidines from DNA by cleaving the N-glycosidic bond, leaving an AP (apurinic/apyrimidinic) site. The AP-lyase activity cleaves the phosphodiester bond 3' to the AP site by a beta-elimination, leaving a 3'-terminal unsaturated sugar and a product with a terminal 5'-phosphate. The chain is Endonuclease III from Bacillus subtilis (strain 168).